We begin with the raw amino-acid sequence, 500 residues long: Cytochrome P450 monooxygenase ausI (500 aa).

A helical membrane pass occupies residues 8–28 (LALLGQPLVPGLMVVSAILYL). Cysteine 440 is a binding site for heme.

Belongs to the cytochrome P450 family. Heme is required as a cofactor.

The protein localises to the membrane. It participates in secondary metabolite biosynthesis; terpenoid biosynthesis. Its function is as follows. Cytochrome P450 monooxygenase; part of the gene cluster B that mediates the biosynthesis of the fungal meroterpenoid acetoxydehydroaustin. The first step of the pathway is the synthesis of 3,5-dimethylorsellinic acid by the polyketide synthase ausA. 3,5-dimethylorsellinic acid is then prenylated by the polyprenyl transferase ausN. Further epoxidation by the FAD-dependent monooxygenase ausM and cyclization by the probable terpene cyclase ausL lead to the formation of protoaustinoid A. Protoaustinoid A is then oxidized to spiro-lactone preaustinoid A3 by the combined action of the FAD-binding monooxygenases ausB and ausC, and the dioxygenase ausE. Acid-catalyzed keto-rearrangement and ring contraction of the tetraketide portion of preaustinoid A3 by ausJ lead to the formation of preaustinoid A4. The aldo-keto reductase ausK, with the help of ausH, is involved in the next step by transforming preaustinoid A4 into isoaustinone which is in turn hydroxylated by the P450 monooxygenase ausI to form austinolide. The cytochrome P450 monooxygenase ausG then modifies austinolide to austinol. Austinol is further acetylated to austin by the O-acetyltransferase ausP, which spontaneously changes to dehydroaustin. The cytochrome P450 monooxygenase then converts dehydroaustin is into 7-dehydrodehydroaustin. The hydroxylation catalyzed by ausR permits the second O-acetyltransferase ausQ to add an additional acetyl group to the molecule, leading to the formation of acetoxydehydroaustin. Due to genetic rearrangements of the clusters and the subsequent loss of some enzymes, the end product of the Penicillium brasilianum austinoid biosynthesis clusters is acetoxydehydroaustin. This is Cytochrome P450 monooxygenase ausI from Penicillium brasilianum.